The chain runs to 159 residues: Eukaryotic translation initiation factor 5A (159 aa).

Residues 1–12 are compositionally biased toward basic and acidic residues; the sequence is MSDEEHQFESKA. The tract at residues 1 to 23 is disordered; sequence MSDEEHQFESKADAGASKTYPQQ. Lys52 is subject to Hypusine.

The protein belongs to the eIF-5A family. Post-translationally, lys-52 undergoes hypusination, a unique post-translational modification that consists in the addition of a butylamino group from spermidine to lysine side chain, leading to the formation of the unusual amino acid hypusine. eIF-5As are the only known proteins to undergo this modification, which is essential for their function.

Functionally, translation factor that promotes translation elongation and termination, particularly upon ribosome stalling at specific amino acid sequence contexts. Binds between the exit (E) and peptidyl (P) site of the ribosome and promotes rescue of stalled ribosome: specifically required for efficient translation of polyproline-containing peptides as well as other motifs that stall the ribosome. Acts as a ribosome quality control (RQC) cofactor by joining the RQC complex to facilitate peptidyl transfer during CAT tailing step. The chain is Eukaryotic translation initiation factor 5A (EIFSV1) from Senecio vernalis (Spring groundsel).